The primary structure comprises 1418 residues: MSDSPLSKRQKRKSAQEPELSLDQGDAEEDSQVENRVNLSENTPEPDLPALEASYSKSYTPRKLVLSSGENRYAFSQPTNSTTTSLHVPNLQPPKTSSRGRDHKSYSQSPPRSPGRSPTRRLELLQLSPVKNSRVELQKIYDRHQSSSKQQSRLFINELVLENFKSYAGKQVVGPFHTSFSAVVGPNGSGKSNVIDSMLFVFGFRANKMRQDRLSDLIHKSEAFPSLQSCSVAVHFQYVIDESSGTSRIDEEKPGLIITRKAFKNNSSKYYINEKESSYTEVTKLLKNEGIDLDHKRFLILQGEVENIAQMKPKAEKESDDGLLEYLEDIIGTANYKPLIEERMGQIENLNEVCLEKENRFEIVDREKNSLESGKETALEFLEKEKQLTLLRSKLFQFKLLQSNSKLASTLEKISSSNKDLEDEKMKFQESLKKVDEIKAQRKEIKDRISSCSSKEKTLVLERRELEGTRVSLEERTKNLVSKMEKAEKTLKSTKHSISEAENMLEELRGQQTEHETEIKDLTQLLEKERSILDDIKLSLKDKTKNISAEIIRHEKELEPWDLQLQEKESQIQLAESELSLLEETQAKLKKNVETLEEKILAKKTHKQELQDLILDLKKKLNSLKDERSQGEKNFTSAHLKLKEMQKVLNAHRQRAMEARSSLSKAQNKSKVLTALSRLQKSGRINGFHGRLGDLGVIDDSFDVAISTACPRLDDVVVDTVECAQHCIDYLRKNKLGYARFILLDRLRQFNLQPISTPENVPRLFDLVKPKNPKFSNAFYSVLRDTLVAQNLKQANNVAYGKKRFRVVTVDGKLIDISGTMSGGGNHVAKGLMKLGTNQSDKVDDYTPEEVDKIERELSERENNFRVASDTVHEMEEELKKLRDHEPDLESQISKAEMEADSLASELTLAEQQVKEAEMAYVKAVSDKAQLNVVMKNLERLRGEYNDLQSETKTKKEKIKGLQDEIMKIGGIKLQMQNSKVESVCQKLDILVAKLKKVKSASKKSGGDVVKFQKLLQNSERDVELSSDELKVIEEQLKHTKLALAENDTNMNETLNLKVELKEQSEQLKEQMEDMEESINEFKSIEIEMKNKLEKLNSLLTYIKSEITQQEKGLNELSIRDVTHTLGMLDDNKMDSVKEDVKNNQELDQEYRSCETQDESEIKDAETSCDNYHPMNIDETSDEVSRGIPRLSEDELRELDVELIESKINELSYYVEETNVDIGVLEEYARRLAEFKRRKLDLNNAVQKRDEVKEQLGILKKKRFDEFMAGFNIISMTLKEMYQMITMGGNAELELVDSLDPFSEGVTFSVMPPKKSWRNITNLSGGEKTLSSLALVFALHKYKPTPLYVMDEIDAALDFRNVSIVANYIKERTKNAQFIVISLRNNMFELAQQLVGVYKRDNRTKSTTIKNIDILNRT.

The disordered stretch occupies residues 1–122 (MSDSPLSKRQ…SPGRSPTRRL (122 aa)). At Ser2 the chain carries N-acetylserine. Composition is skewed to polar residues over residues 34–43 (ENRVNLSENT) and 68–97 (SGEN…PKTS). Thr43 is modified (phosphothreonine). A compositionally biased stretch (low complexity) spans 107–117 (SQSPPRSPGRS). Residue Ser113 is modified to Phosphoserine. 185-192 (GPNGSGKS) contributes to the ATP binding site. A coiled-coil region spans residues 345–673 (GQIENLNEVC…SKAQNKSKVL (329 aa)). The SMC hinge domain occupies 686–799 (NGFHGRLGDL…QNLKQANNVA (114 aa)). Coiled coils occupy residues 849–1172 (EEVD…CDNY) and 1224–1263 (VLEE…KKKR).

It belongs to the SMC family. SMC4 subfamily. As to quaternary structure, forms a heterodimer with SMC2. Component of the condensin complex, which contains the SMC2 and SMC4 heterodimer, and three non SMC subunits that probably regulate the complex: BRN1, YCS4 and YCG1/YCS5.

It is found in the nucleus. The protein resides in the cytoplasm. Its subcellular location is the chromosome. Central component of the condensin complex, a complex required for conversion of interphase chromatin into mitotic-like condense chromosomes. The condensin complex probably introduces positive supercoils into relaxed DNA in the presence of type I topoisomerases and converts nicked DNA into positive knotted forms in the presence of type II topoisomerases. The protein is Structural maintenance of chromosomes protein 4 (SMC4) of Saccharomyces cerevisiae (strain ATCC 204508 / S288c) (Baker's yeast).